The primary structure comprises 436 residues: 3-ketoacyl-CoA thiolase (436 aa).

Catalysis depends on cysteine 99, which acts as the Acyl-thioester intermediate. Active-site proton acceptor residues include histidine 392 and cysteine 422.

It belongs to the thiolase-like superfamily. Thiolase family. In terms of assembly, heterotetramer of two alpha chains (FadJ) and two beta chains (FadI).

The protein localises to the cytoplasm. The catalysed reaction is an acyl-CoA + acetyl-CoA = a 3-oxoacyl-CoA + CoA. It participates in lipid metabolism; fatty acid beta-oxidation. Functionally, catalyzes the final step of fatty acid oxidation in which acetyl-CoA is released and the CoA ester of a fatty acid two carbons shorter is formed. This chain is 3-ketoacyl-CoA thiolase, found in Shewanella putrefaciens (strain CN-32 / ATCC BAA-453).